The chain runs to 372 residues: Putative RING-H2 finger protein ATL21A (372 aa).

An N-terminal signal peptide occupies residues methionine 1–alanine 20. Residues isoleucine 242 to valine 262 traverse the membrane as a helical segment. The RING-type; atypical zinc finger occupies cysteine 320–arginine 362.

Belongs to the RING-type zinc finger family. ATL subfamily.

The protein localises to the membrane. It carries out the reaction S-ubiquitinyl-[E2 ubiquitin-conjugating enzyme]-L-cysteine + [acceptor protein]-L-lysine = [E2 ubiquitin-conjugating enzyme]-L-cysteine + N(6)-ubiquitinyl-[acceptor protein]-L-lysine.. The protein operates within protein modification; protein ubiquitination. The protein is Putative RING-H2 finger protein ATL21A (ATL21A) of Arabidopsis thaliana (Mouse-ear cress).